A 361-amino-acid polypeptide reads, in one-letter code: Phosphoserine aminotransferase (361 aa).

R43 is a binding site for L-glutamate. Pyridoxal 5'-phosphate is bound by residues 77 to 78 (AS), W103, T153, D173, and Q196. K197 carries the post-translational modification N6-(pyridoxal phosphate)lysine. 238 to 239 (NT) contacts pyridoxal 5'-phosphate.

It belongs to the class-V pyridoxal-phosphate-dependent aminotransferase family. SerC subfamily. As to quaternary structure, homodimer. Requires pyridoxal 5'-phosphate as cofactor.

The protein localises to the cytoplasm. It catalyses the reaction O-phospho-L-serine + 2-oxoglutarate = 3-phosphooxypyruvate + L-glutamate. The catalysed reaction is 4-(phosphooxy)-L-threonine + 2-oxoglutarate = (R)-3-hydroxy-2-oxo-4-phosphooxybutanoate + L-glutamate. The protein operates within amino-acid biosynthesis; L-serine biosynthesis; L-serine from 3-phospho-D-glycerate: step 2/3. Its pathway is cofactor biosynthesis; pyridoxine 5'-phosphate biosynthesis; pyridoxine 5'-phosphate from D-erythrose 4-phosphate: step 3/5. Functionally, catalyzes the reversible conversion of 3-phosphohydroxypyruvate to phosphoserine and of 3-hydroxy-2-oxo-4-phosphonooxybutanoate to phosphohydroxythreonine. This is Phosphoserine aminotransferase from Pseudomonas fluorescens (strain SBW25).